Reading from the N-terminus, the 129-residue chain is Small ribosomal subunit protein uS11 (129 aa).

Belongs to the universal ribosomal protein uS11 family. As to quaternary structure, part of the 30S ribosomal subunit. Interacts with proteins S7 and S18. Binds to IF-3.

In terms of biological role, located on the platform of the 30S subunit, it bridges several disparate RNA helices of the 16S rRNA. Forms part of the Shine-Dalgarno cleft in the 70S ribosome. In Bacillus cereus (strain G9842), this protein is Small ribosomal subunit protein uS11.